Reading from the N-terminus, the 398-residue chain is Glucose-1-phosphate adenylyltransferase (398 aa).

Residues Tyr-100, Gly-165, 180–181 (EK), and Ser-191 contribute to the alpha-D-glucose 1-phosphate site.

The protein belongs to the bacterial/plant glucose-1-phosphate adenylyltransferase family. Homotetramer.

It carries out the reaction alpha-D-glucose 1-phosphate + ATP + H(+) = ADP-alpha-D-glucose + diphosphate. Its pathway is glycan biosynthesis; glycogen biosynthesis. In terms of biological role, involved in the biosynthesis of ADP-glucose, a building block required for the elongation reactions to produce glycogen. Catalyzes the reaction between ATP and alpha-D-glucose 1-phosphate (G1P) to produce pyrophosphate and ADP-Glc. The polypeptide is Glucose-1-phosphate adenylyltransferase (Desulfitobacterium hafniense (strain Y51)).